A 257-amino-acid chain; its full sequence is Regulator of G-protein signaling 7-binding protein (257 aa).

2 disordered regions span residues 1–45 (MSSA…SAHK) and 174–196 (ETPA…WQVS). Basic and acidic residues predominate over residues 32 to 45 (DWERRGSGSESAHK). Residues 180 to 192 (DSSSSPVDSQQHS) show a composition bias toward low complexity. Residues 242-247 (RRRKRR) carry the Nuclear localization signal motif. Residues Cys-252 and Cys-253 are each lipidated (S-palmitoyl cysteine).

The protein belongs to the RGS7BP/RGS9BP family. As to quaternary structure, interacts with 'R7' family proteins RGS6, RGS7, RGS9 and RGS11. Component of some R7-Gbeta5 complex composed of some R7 protein (RGS6, RGS7, RGS9 or RGS11), Gbeta5 (GNB5) and RGS7BP. In terms of processing, palmitoylated. Undergoes rapid palmitoylation turnover. De novo and turnover palmitoylation are both mediated by ZDHHC2. Palmitoylation regulates the cell membrane and nuclear shuttling and the regulation of GPCR signaling. Upon depalmitoylation, it is targeted from the plasma membrane into the nucleus. GPCR signaling inhibits depalmitoylation and promotes localization to the plasma membrane.

The protein resides in the nucleus. Its subcellular location is the cytoplasm. The protein localises to the cell membrane. Functionally, regulator of G protein-coupled receptor (GPCR) signaling. Regulatory subunit of the R7-Gbeta5 complexes that acts by controlling the subcellular location of the R7-Gbeta5 complexes. When palmitoylated, it targets the R7-Gbeta5 complexes to the plasma membrane, leading to inhibit G protein alpha subunits. When it is unpalmitoylated, the R7-Gbeta5 complexes undergo a nuclear/cytoplasmic shuttling. May also act by controlling the proteolytic stability of R7 proteins, probably by protecting them from degradation. This Homo sapiens (Human) protein is Regulator of G-protein signaling 7-binding protein (RGS7BP).